A 227-amino-acid chain; its full sequence is 2,3-bisphosphoglycerate-dependent phosphoglycerate mutase (227 aa).

Residues 7-14 (RHGQSEWN), 20-21 (TG), Arg-59, 86-89 (ERHY), Lys-97, 113-114 (RR), and 182-183 (GN) each bind substrate. His-8 (tele-phosphohistidine intermediate) is an active-site residue. Glu-86 functions as the Proton donor/acceptor in the catalytic mechanism.

Belongs to the phosphoglycerate mutase family. BPG-dependent PGAM subfamily. In terms of assembly, homodimer.

It carries out the reaction (2R)-2-phosphoglycerate = (2R)-3-phosphoglycerate. The protein operates within carbohydrate degradation; glycolysis; pyruvate from D-glyceraldehyde 3-phosphate: step 3/5. Catalyzes the interconversion of 2-phosphoglycerate and 3-phosphoglycerate. The sequence is that of 2,3-bisphosphoglycerate-dependent phosphoglycerate mutase from Neisseria meningitidis serogroup C / serotype 2a (strain ATCC 700532 / DSM 15464 / FAM18).